We begin with the raw amino-acid sequence, 468 residues long: TFIIA-alpha and beta-like factor (468 aa).

2 disordered regions span residues 215 to 236 (DRRLLPGNELRPQESSPYLSLP) and 379 to 416 (DSVSNEDSTANSSDNEDHQINAPEEDPLNSGDDVSEQD). A compositionally biased stretch (polar residues) spans 380 to 391 (SVSNEDSTANSS). Positions 401–416 (PEEDPLNSGDDVSEQD) are enriched in acidic residues.

Belongs to the TFIIA subunit 1 family. Testis specific. Expressed in pachytene spermatocytes and haploid spermatids.

Its subcellular location is the nucleus. Its function is as follows. May function as a testis specific transcription factor. Binds DNA in conjunction with GTF2A2 and TBP (the TATA-binding protein) and together with GTF2A2, allows mRNA transcription. The protein is TFIIA-alpha and beta-like factor (Gtf2a1l) of Mus musculus (Mouse).